Consider the following 398-residue polypeptide: MIALRVHNTRVVSRSLTVWTRPSPTLTLSRSLATESDALDKPKTRRRKTVFTDALNSGPSFDDFVSGKASEIMDPLEAARKDPNQRLPSWLKVPIPKGKSYHNVKKDVRELKLATVCEEAKCPNIGECWGGKKSEATATIMLLGDTCTRGCRFCSVKTNRNPAKPDPMEPENTAEAISRWGLGYVVLTTVDRDDLADGGAHHLAETVMKIKQKAPQILVEVLGGDFRGDLDMATVLAKSGLDVYAHNLETVEALTPFVRDRRATYRQSLSVLQRAKETKSSLVTKTSLMLGLGETDEQILQTLKDLREINCDVVTFGQYMRPTKRHMKVVEYVTPEKFDYWRDTALEMGFLYVASGPLVRSSYKAGEAFIENVIRKRRHNVGEAPRLAQEIQPKIFRE.

A mitochondrion-targeting transit peptide spans 1-32 (MIALRVHNTRVVSRSLTVWTRPSPTLTLSRSL). [4Fe-4S] cluster is bound by residues C117, C122, C128, C147, C151, C154, and S362. The 220-residue stretch at 132 to 351 (KKSEATATIM…RDTALEMGFL (220 aa)) folds into the Radical SAM core domain.

It belongs to the radical SAM superfamily. Lipoyl synthase family. Requires [4Fe-4S] cluster as cofactor.

It localises to the mitochondrion. The catalysed reaction is [[Fe-S] cluster scaffold protein carrying a second [4Fe-4S](2+) cluster] + N(6)-octanoyl-L-lysyl-[protein] + 2 oxidized [2Fe-2S]-[ferredoxin] + 2 S-adenosyl-L-methionine + 4 H(+) = [[Fe-S] cluster scaffold protein] + N(6)-[(R)-dihydrolipoyl]-L-lysyl-[protein] + 4 Fe(3+) + 2 hydrogen sulfide + 2 5'-deoxyadenosine + 2 L-methionine + 2 reduced [2Fe-2S]-[ferredoxin]. Its pathway is protein modification; protein lipoylation via endogenous pathway; protein N(6)-(lipoyl)lysine from octanoyl-[acyl-carrier-protein]: step 2/2. In terms of biological role, catalyzes the radical-mediated insertion of two sulfur atoms into the C-6 and C-8 positions of the octanoyl moiety bound to the lipoyl domains of lipoate-dependent enzymes, thereby converting the octanoylated domains into lipoylated derivatives. The chain is Lipoyl synthase, mitochondrial from Scheffersomyces stipitis (strain ATCC 58785 / CBS 6054 / NBRC 10063 / NRRL Y-11545) (Yeast).